A 385-amino-acid chain; its full sequence is Bifunctional chorismate mutase/prephenate dehydratase (385 aa).

Positions 1–92 (MPSKNDLLSF…ESVLTQKKLL (92 aa)) constitute a Chorismate mutase domain. Substrate is bound by residues arginine 11, arginine 28, lysine 39, aspartate 48, glutamate 52, serine 84, and glutamine 88. A Prephenate dehydratase domain is found at 105–285 (SFSFLGPKGS…NITRFILLSR (181 aa)). The segment at 286–385 (KPVSISSKIP…PSENITPIIP (100 aa)) is regulatory. The ACT domain occupies 299-376 (TLIFNTGQES…KFIKILGCYP (78 aa)).

The protein resides in the cytoplasm. It carries out the reaction chorismate = prephenate. The enzyme catalyses prephenate + H(+) = 3-phenylpyruvate + CO2 + H2O. It functions in the pathway amino-acid biosynthesis; L-phenylalanine biosynthesis; phenylpyruvate from prephenate: step 1/1. Its pathway is metabolic intermediate biosynthesis; prephenate biosynthesis; prephenate from chorismate: step 1/1. In terms of biological role, catalyzes the Claisen rearrangement of chorismate to prephenate and the decarboxylation/dehydration of prephenate to phenylpyruvate. In Buchnera aphidicola subsp. Schizaphis graminum (strain Sg), this protein is Bifunctional chorismate mutase/prephenate dehydratase (pheA).